Consider the following 508-residue polypeptide: UTP--glucose-1-phosphate uridylyltransferase (508 aa).

Ser13 is modified (phosphoserine). UTP is bound by residues 113 to 116 (LNGG), Lys127, Gln190, and Gly222. Residue 115–116 (GG) participates in substrate binding. Position 127 (Lys127) interacts with Mg(2+). Substrate is bound by residues His223 and 251-253 (NID). UTP contacts are provided by Asp253 and Lys396. Asp253 contributes to the Mg(2+) binding site. The active site involves Lys396. Thr426 is modified (phosphothreonine). Ser434 bears the Phosphoserine mark. Lys438 is modified (N6-acetyllysine). Phosphoserine occurs at positions 448 and 461. The tract at residues 457 to 508 (HLTVSGDVTFGKNVSLKGTVIIIANHGDRIDIPPGAVLENKIVSGNLRILDH) is oligomerization. Positions 502–503 (NL) are critical for end-to-end subunit interaction.

The protein belongs to the UDPGP type 1 family. As to quaternary structure, homooctamer.

The protein resides in the cytoplasm. It catalyses the reaction alpha-D-glucose 1-phosphate + UTP + H(+) = UDP-alpha-D-glucose + diphosphate. Its pathway is glycan biosynthesis; glycogen biosynthesis. UTP--glucose-1-phosphate uridylyltransferase catalyzing the conversion of glucose-1-phosphate into UDP-glucose, a crucial precursor for the production of glycogen. The polypeptide is UTP--glucose-1-phosphate uridylyltransferase (UGP2) (Cricetulus griseus (Chinese hamster)).